A 464-amino-acid polypeptide reads, in one-letter code: UDP-N-acetylmuramate--L-alanine ligase (464 aa).

Gly-112–Thr-118 serves as a coordination point for ATP.

The protein belongs to the MurCDEF family.

The protein resides in the cytoplasm. It carries out the reaction UDP-N-acetyl-alpha-D-muramate + L-alanine + ATP = UDP-N-acetyl-alpha-D-muramoyl-L-alanine + ADP + phosphate + H(+). It participates in cell wall biogenesis; peptidoglycan biosynthesis. In terms of biological role, cell wall formation. The sequence is that of UDP-N-acetylmuramate--L-alanine ligase from Acidithiobacillus ferrooxidans (strain ATCC 23270 / DSM 14882 / CIP 104768 / NCIMB 8455) (Ferrobacillus ferrooxidans (strain ATCC 23270)).